Reading from the N-terminus, the 194-residue chain is Large ribosomal subunit protein bL25 (194 aa).

It belongs to the bacterial ribosomal protein bL25 family. CTC subfamily. Part of the 50S ribosomal subunit; part of the 5S rRNA/L5/L18/L25 subcomplex. Contacts the 5S rRNA. Binds to the 5S rRNA independently of L5 and L18.

This is one of the proteins that binds to the 5S RNA in the ribosome where it forms part of the central protuberance. In Geobacter sulfurreducens (strain ATCC 51573 / DSM 12127 / PCA), this protein is Large ribosomal subunit protein bL25.